The primary structure comprises 233 residues: Purine nucleoside phosphorylase DeoD-type (233 aa).

Histidine 4 provides a ligand contact to a purine D-ribonucleoside. Phosphate contacts are provided by residues glycine 20, arginine 24, arginine 43, and 87 to 90 (RVGS). A purine D-ribonucleoside-binding positions include 178–180 (EME) and 202–203 (SD). The active-site Proton donor is aspartate 203.

This sequence belongs to the PNP/UDP phosphorylase family. In terms of assembly, homohexamer; trimer of homodimers.

The enzyme catalyses a purine D-ribonucleoside + phosphate = a purine nucleobase + alpha-D-ribose 1-phosphate. It carries out the reaction a purine 2'-deoxy-D-ribonucleoside + phosphate = a purine nucleobase + 2-deoxy-alpha-D-ribose 1-phosphate. In terms of biological role, catalyzes the reversible phosphorolytic breakdown of the N-glycosidic bond in the beta-(deoxy)ribonucleoside molecules, with the formation of the corresponding free purine bases and pentose-1-phosphate. This is Purine nucleoside phosphorylase DeoD-type from Bacillus subtilis (strain 168).